Reading from the N-terminus, the 238-residue chain is uncharacterized protein (238 aa).

A helical membrane pass occupies residues 10 to 33; the sequence is TLLALMISLSLSSLLLLSISHFYV.

It is found in the membrane. This is an uncharacterized protein from Haemophilus influenzae (strain ATCC 51907 / DSM 11121 / KW20 / Rd).